We begin with the raw amino-acid sequence, 499 residues long: Sialic acid-binding Ig-like lectin 8 (499 aa).

The signal sequence occupies residues 1–16 (MLLLLLLLPLLWGTKG). Over 17-363 (MEGDRQYGDG…RPVSQVTLAA (347 aa)) the chain is Extracellular. A carbohydrate-binding positions include Y23, 72 to 75 (RPYQ), R125, and 134 to 138 (SYKSQ). An Ig-like V-type domain is found at 40–123 (GLCVHVPCSF…ARKRDKGSYF (84 aa)). Intrachain disulfides connect C42–C181, C47–C107, and C175–C224. 2 Ig-like C2-type domains span residues 157–240 (PDIL…STVR) and 246–344 (PPWN…LSLS). N-linked (GlcNAc...) asparagine glycosylation is present at N172. 2 N-linked (GlcNAc...) asparagine glycosylation sites follow: N249 and N267. A disulfide bridge links C283 with C328. Residues 364–384 (VGGAGATALAFLSFCIIFIIV) form a helical membrane-spanning segment. Residues 385–499 (RSCRKKSARP…HNPSSKEVRG (115 aa)) are Cytoplasmic-facing. A disordered region spans residues 410–443 (RGSASQGPLTESWKDGNPLKKPPPAVAPSSGEEG). An ITIM motif motif is present at residues 445–450 (LHYATL). 2 disordered regions span residues 451-470 (SFHK…DSEY) and 478-499 (RETA…EVRG). The SLAM-like motif motif lies at 468 to 473 (SEYSEI).

Belongs to the immunoglobulin superfamily. SIGLEC (sialic acid binding Ig-like lectin) family. In terms of tissue distribution, expressed specifically on blood cells namely basophil, mast cells and eosinophils.

It localises to the membrane. Functionally, putative adhesion molecule that mediates sialic-acid dependent binding to blood cells. Preferentially binds to alpha-2,3-linked sialic acid. Also binds to alpha-2,6-linked sialic acid. The sialic acid recognition site may be masked by cis interactions with sialic acids on the same cell surface. Recognizes simultaneously epitopes having a terminal N-acetylneuraminic acid (sialic acid) and an underlying 6-O-sulfated galactose. Preferentially binds to Gal-6-sulfated sialyl-Lewis X glycan epitopes. The chain is Sialic acid-binding Ig-like lectin 8 (SIGLEC8) from Homo sapiens (Human).